The primary structure comprises 366 residues: Ribosomal RNA large subunit methyltransferase M (366 aa).

Residues S188, 221–224 (CPGG), D240, D260, and D277 contribute to the S-adenosyl-L-methionine site. K306 (proton acceptor) is an active-site residue.

It belongs to the class I-like SAM-binding methyltransferase superfamily. RNA methyltransferase RlmE family. RlmM subfamily. Monomer.

Its subcellular location is the cytoplasm. The catalysed reaction is cytidine(2498) in 23S rRNA + S-adenosyl-L-methionine = 2'-O-methylcytidine(2498) in 23S rRNA + S-adenosyl-L-homocysteine + H(+). In terms of biological role, catalyzes the 2'-O-methylation at nucleotide C2498 in 23S rRNA. The sequence is that of Ribosomal RNA large subunit methyltransferase M from Salmonella paratyphi C (strain RKS4594).